A 261-amino-acid polypeptide reads, in one-letter code: Cytochrome c oxidase subunit 3 (261 aa).

At 1-15 (MTHQTHAYHMVNPSP) the chain is on the mitochondrial matrix side. A helical membrane pass occupies residues 16-34 (WPLTGALSALLMSSGLTMW). The Mitochondrial intermembrane segment spans residues 35 to 40 (FHFNSL). Residues 41 to 66 (ILLTTGLVTNILTMYQWWRDVIREST) form a helical membrane-spanning segment. Topologically, residues 67–72 (FQGHHT) are mitochondrial matrix. The chain crosses the membrane as a helical span at residues 73-105 (PVVQKGLRYGMVLFIISEVLFFTGFFWAFYHSS). Over 106–128 (LAPTPELGGCWPPTGINPLNPLE) the chain is Mitochondrial intermembrane. The helical transmembrane segment at 129–152 (VPLLNTSVLLASGVSITWAHHSLM) threads the bilayer. Over 153 to 155 (EGN) the chain is Mitochondrial matrix. Residues 156 to 183 (RKQMLQALFITIALGVYFTLLQASEYHE) form a helical membrane-spanning segment. The Mitochondrial intermembrane segment spans residues 184 to 190 (ASFTISD). Residues 191-223 (GVYGSTFFVATGFHGLHVIIGSTFLIVCFLRQL) traverse the membrane as a helical segment. The Mitochondrial matrix segment spans residues 224 to 232 (KFHFTSDHH). Residues 233 to 256 (FGFEAAAWYWHFVDVVWLFLYVSI) traverse the membrane as a helical segment. Residues 257-261 (YWWGS) lie on the Mitochondrial intermembrane side of the membrane.

Belongs to the cytochrome c oxidase subunit 3 family. Component of the cytochrome c oxidase (complex IV, CIV), a multisubunit enzyme composed of 14 subunits. The complex is composed of a catalytic core of 3 subunits MT-CO1, MT-CO2 and MT-CO3, encoded in the mitochondrial DNA, and 11 supernumerary subunits COX4I, COX5A, COX5B, COX6A, COX6B, COX6C, COX7A, COX7B, COX7C, COX8 and NDUFA4, which are encoded in the nuclear genome. The complex exists as a monomer or a dimer and forms supercomplexes (SCs) in the inner mitochondrial membrane with NADH-ubiquinone oxidoreductase (complex I, CI) and ubiquinol-cytochrome c oxidoreductase (cytochrome b-c1 complex, complex III, CIII), resulting in different assemblies (supercomplex SCI(1)III(2)IV(1) and megacomplex MCI(2)III(2)IV(2)).

It localises to the mitochondrion inner membrane. The catalysed reaction is 4 Fe(II)-[cytochrome c] + O2 + 8 H(+)(in) = 4 Fe(III)-[cytochrome c] + 2 H2O + 4 H(+)(out). In terms of biological role, component of the cytochrome c oxidase, the last enzyme in the mitochondrial electron transport chain which drives oxidative phosphorylation. The respiratory chain contains 3 multisubunit complexes succinate dehydrogenase (complex II, CII), ubiquinol-cytochrome c oxidoreductase (cytochrome b-c1 complex, complex III, CIII) and cytochrome c oxidase (complex IV, CIV), that cooperate to transfer electrons derived from NADH and succinate to molecular oxygen, creating an electrochemical gradient over the inner membrane that drives transmembrane transport and the ATP synthase. Cytochrome c oxidase is the component of the respiratory chain that catalyzes the reduction of oxygen to water. Electrons originating from reduced cytochrome c in the intermembrane space (IMS) are transferred via the dinuclear copper A center (CU(A)) of subunit 2 and heme A of subunit 1 to the active site in subunit 1, a binuclear center (BNC) formed by heme A3 and copper B (CU(B)). The BNC reduces molecular oxygen to 2 water molecules using 4 electrons from cytochrome c in the IMS and 4 protons from the mitochondrial matrix. The polypeptide is Cytochrome c oxidase subunit 3 (MT-CO3) (Hippopotamus amphibius (Hippopotamus)).